Reading from the N-terminus, the 39-residue chain is Contryphan-Cal3 (39 aa).

The signal sequence occupies residues 1–20 (MTRTAVLLLTLLFLVAMAAS). Cys29 and Cys35 are disulfide-bonded.

Expressed by the venom duct.

The protein localises to the secreted. Its function is as follows. Probable neurotoxin. In Californiconus californicus (California cone), this protein is Contryphan-Cal3.